We begin with the raw amino-acid sequence, 184 residues long: Peptidyl-tRNA hydrolase (184 aa).

TRNA is bound at residue Tyr14. His19 (proton acceptor) is an active-site residue. Positions 64, 66, and 112 each coordinate tRNA.

It belongs to the PTH family. In terms of assembly, monomer.

It localises to the cytoplasm. It carries out the reaction an N-acyl-L-alpha-aminoacyl-tRNA + H2O = an N-acyl-L-amino acid + a tRNA + H(+). Its function is as follows. Hydrolyzes ribosome-free peptidyl-tRNAs (with 1 or more amino acids incorporated), which drop off the ribosome during protein synthesis, or as a result of ribosome stalling. In terms of biological role, catalyzes the release of premature peptidyl moieties from peptidyl-tRNA molecules trapped in stalled 50S ribosomal subunits, and thus maintains levels of free tRNAs and 50S ribosomes. This Listeria welshimeri serovar 6b (strain ATCC 35897 / DSM 20650 / CCUG 15529 / CIP 8149 / NCTC 11857 / SLCC 5334 / V8) protein is Peptidyl-tRNA hydrolase.